We begin with the raw amino-acid sequence, 515 residues long: Probable malate:quinone oxidoreductase (515 aa).

It belongs to the MQO family. It depends on FAD as a cofactor.

It catalyses the reaction (S)-malate + a quinone = a quinol + oxaloacetate. Its pathway is carbohydrate metabolism; tricarboxylic acid cycle; oxaloacetate from (S)-malate (quinone route): step 1/1. In Blochmanniella pennsylvanica (strain BPEN), this protein is Probable malate:quinone oxidoreductase.